We begin with the raw amino-acid sequence, 357 residues long: Alanine racemase (357 aa).

Lys-33 serves as the catalytic Proton acceptor; specific for D-alanine. N6-(pyridoxal phosphate)lysine is present on Lys-33. A substrate-binding site is contributed by Arg-130. The Proton acceptor; specific for L-alanine role is filled by Tyr-252. Met-300 contributes to the substrate binding site.

The protein belongs to the alanine racemase family. Pyridoxal 5'-phosphate is required as a cofactor.

It carries out the reaction L-alanine = D-alanine. It participates in amino-acid biosynthesis; D-alanine biosynthesis; D-alanine from L-alanine: step 1/1. Catalyzes the interconversion of L-alanine and D-alanine. May also act on other amino acids. This chain is Alanine racemase (alr), found in Acidiphilium cryptum (strain JF-5).